The chain runs to 267 residues: Putative methylsterol monooxygenase DDB_G0270946 (267 aa).

The next 3 membrane-spanning stretches (helical) occupy residues 31-51 (FIAH…ADFI), 72-92 (YCAI…MYIF), and 110-130 (IPYL…YFYW). The Fatty acid hydroxylase domain maps to 119–249 (SSFIIEDFYF…FTYLDKIFGT (131 aa)). A Histidine box-1 motif is present at residues 132 to 136 (HRALH). A Histidine box-2 motif is present at residues 145–149 (HKVHH). Residues 224-230 (FHDYHHE) carry the Histidine box-3 motif.

Belongs to the sterol desaturase family. Requires Fe cation as cofactor.

It is found in the endoplasmic reticulum membrane. The enzyme catalyses 4,4-dimethyl-5alpha-cholest-7-en-3beta-ol + 6 Fe(II)-[cytochrome b5] + 3 O2 + 5 H(+) = 4alpha-carboxy-4beta-methyl-5alpha-cholest-7-ene-3beta-ol + 6 Fe(III)-[cytochrome b5] + 4 H2O. The protein operates within steroid biosynthesis; zymosterol biosynthesis; zymosterol from lanosterol: step 3/6. This is Putative methylsterol monooxygenase DDB_G0270946 from Dictyostelium discoideum (Social amoeba).